The primary structure comprises 562 residues: Sensor histidine kinase MtrB (562 aa).

Helical transmembrane passes span 42–62 (VVAL…FVLT) and 213–233 (GTMA…ALLV). One can recognise an HAMP domain in the interval 235-287 (RQVVVPVRSASRIAERFAEGHLSERMPVRGEDDMARLAVSFNDMAESLSRQIT). Positions 302–519 (DVSHELRTPL…CFRLTLPLVR (218 aa)) constitute a Histidine kinase domain. The segment at 526 to 562 (SPLPMKPILQPSPQASTAGQQHGTQRQRLREHAERSR) is disordered. Residues 536–551 (PSPQASTAGQQHGTQR) are compositionally biased toward polar residues. Over residues 553–562 (RLREHAERSR) the composition is skewed to basic and acidic residues.

It is found in the cell membrane. The catalysed reaction is ATP + protein L-histidine = ADP + protein N-phospho-L-histidine.. Its function is as follows. Member of the two-component regulatory system MtrA/MtrB. Seems to function as a membrane-associated protein kinase that phosphorylates MtrA in response to environmental signals. The protein is Sensor histidine kinase MtrB (mtrB) of Mycobacterium leprae (strain TN).